Here is a 338-residue protein sequence, read N- to C-terminus: Anthranilate phosphoribosyltransferase (338 aa).

5-phospho-alpha-D-ribose 1-diphosphate is bound by residues G80, 83–84 (GD), T88, 90–93 (NIST), 108–116 (KHGNRAVSS), and S120. G80 contacts anthranilate. S92 serves as a coordination point for Mg(2+). N111 lines the anthranilate pocket. R166 contributes to the anthranilate binding site. Residues D225 and E226 each coordinate Mg(2+).

The protein belongs to the anthranilate phosphoribosyltransferase family. Homodimer. It depends on Mg(2+) as a cofactor.

The enzyme catalyses N-(5-phospho-beta-D-ribosyl)anthranilate + diphosphate = 5-phospho-alpha-D-ribose 1-diphosphate + anthranilate. It participates in amino-acid biosynthesis; L-tryptophan biosynthesis; L-tryptophan from chorismate: step 2/5. In terms of biological role, catalyzes the transfer of the phosphoribosyl group of 5-phosphorylribose-1-pyrophosphate (PRPP) to anthranilate to yield N-(5'-phosphoribosyl)-anthranilate (PRA). This Thermoanaerobacter sp. (strain X514) protein is Anthranilate phosphoribosyltransferase.